The following is a 327-amino-acid chain: Delta(3,5)-Delta(2,4)-dienoyl-CoA isomerase, mitochondrial (327 aa).

The transit peptide at 1–33 (MATAMTVSSKLRGLLMQQLRGTSQLYFNISLRS) directs the protein to the mitochondrion. 115–119 (SGIDL) is a substrate binding site. K147 carries the N6-acetyllysine modification. G173 serves as a coordination point for substrate. K230 is modified (N6-succinyllysine). S267 is subject to Phosphoserine. At K316 the chain carries N6-succinyllysine. The Microbody targeting signal signature appears at 325-327 (SKL). K326 is modified (N6-acetyllysine).

It belongs to the enoyl-CoA hydratase/isomerase family. As to quaternary structure, homohexamer.

Its subcellular location is the mitochondrion. The protein resides in the peroxisome. It catalyses the reaction (3E,5Z)-octadienoyl-CoA = (2E,4E)-octadienoyl-CoA. The enzyme catalyses (3E,5Z,8Z,11Z,14Z)-eicosapentaenoyl-CoA = (2E,4E,8Z,11Z,14Z)-eicosapentaenoyl-CoA. Its pathway is lipid metabolism; fatty acid beta-oxidation. Isomerization of 3-trans,5-cis-dienoyl-CoA to 2-trans,4-trans-dienoyl-CoA. The protein is Delta(3,5)-Delta(2,4)-dienoyl-CoA isomerase, mitochondrial of Mus musculus (Mouse).